The chain runs to 448 residues: uncharacterized protein (448 aa).

As to expression, component of the acid-insoluble and acid-soluble organic matrix of the aragonitic skeleton (at protein level).

The protein localises to the secreted. This is an uncharacterized protein from Acropora millepora (Staghorn coral).